Here is a 66-residue protein sequence, read N- to C-terminus: Large ribosomal subunit protein bL35 (66 aa).

This sequence belongs to the bacterial ribosomal protein bL35 family.

The polypeptide is Large ribosomal subunit protein bL35 (Jannaschia sp. (strain CCS1)).